Consider the following 605-residue polypeptide: Putative zinc finger CCCH domain-containing protein 57 (605 aa).

3 disordered regions span residues 198–218 (RHTG…GREV), 238–261 (LLQD…DGEV), and 375–403 (QASH…YQQP). Composition is skewed to basic and acidic residues over residues 201-218 (GHES…GREV) and 238-250 (LLQD…RADA). Over residues 389–403 (FPFQQQPQHDGYQQP) the composition is skewed to low complexity. 2 C3H1-type zinc fingers span residues 519-547 (EPKT…HSQD) and 557-585 (KYRT…QHRL).

This is Putative zinc finger CCCH domain-containing protein 57 from Oryza sativa subsp. japonica (Rice).